A 379-amino-acid chain; its full sequence is 2-methylcitrate synthase (379 aa).

Residue His-187 participates in substrate binding. The active site involves His-222. 264–268 (KVMGF) is a CoA binding site. His-270 is an active-site residue. Position 279 (Arg-279) interacts with substrate. Asp-321 is an active-site residue. Positions 346 and 365 each coordinate substrate.

Belongs to the citrate synthase family. In terms of assembly, homodimer.

The catalysed reaction is propanoyl-CoA + oxaloacetate + H2O = (2S,3S)-2-methylcitrate + CoA + H(+). The enzyme catalyses oxaloacetate + acetyl-CoA + H2O = citrate + CoA + H(+). Its pathway is organic acid metabolism; propanoate degradation. It participates in carbohydrate metabolism; tricarboxylic acid cycle; isocitrate from oxaloacetate: step 1/2. Its function is as follows. Involved in the catabolism of short chain fatty acids (SCFA) via the tricarboxylic acid (TCA)(acetyl degradation route) and via the 2-methylcitrate cycle I (propionate degradation route). Catalyzes the Claisen condensation of propionyl-CoA and oxaloacetate (OAA) to yield 2-methylcitrate (2-MC) and CoA. Also catalyzes the condensation of oxaloacetate with acetyl-CoA but with a lower specificity. The protein is 2-methylcitrate synthase (gltA) of Antarctic bacterium DS2-3R.